Reading from the N-terminus, the 77-residue chain is MGGLSIWHWLIVLLIVALVFGTKKLRNIGNDLGSAVKGFKDGMREGEAPADPQQLPRSGSVNVDAKDATRSSDSNKA.

A helical membrane pass occupies residues 1–21 (MGGLSIWHWLIVLLIVALVFG). Residues 40–77 (KDGMREGEAPADPQQLPRSGSVNVDAKDATRSSDSNKA) are disordered. Over residues 64–77 (DAKDATRSSDSNKA) the composition is skewed to basic and acidic residues.

Belongs to the TatA/E family. As to quaternary structure, the Tat system comprises two distinct complexes: a TatABC complex, containing multiple copies of TatA, TatB and TatC subunits, and a separate TatA complex, containing only TatA subunits. Substrates initially bind to the TatABC complex, which probably triggers association of the separate TatA complex to form the active translocon.

Its subcellular location is the cell inner membrane. Its function is as follows. Part of the twin-arginine translocation (Tat) system that transports large folded proteins containing a characteristic twin-arginine motif in their signal peptide across membranes. TatA could form the protein-conducting channel of the Tat system. The protein is Sec-independent protein translocase protein TatA of Burkholderia thailandensis (strain ATCC 700388 / DSM 13276 / CCUG 48851 / CIP 106301 / E264).